The primary structure comprises 251 residues: Imidazole glycerol phosphate synthase subunit HisF (251 aa).

Residues D11 and D130 contribute to the active site.

It belongs to the HisA/HisF family. As to quaternary structure, heterodimer of HisH and HisF.

It is found in the cytoplasm. The catalysed reaction is 5-[(5-phospho-1-deoxy-D-ribulos-1-ylimino)methylamino]-1-(5-phospho-beta-D-ribosyl)imidazole-4-carboxamide + L-glutamine = D-erythro-1-(imidazol-4-yl)glycerol 3-phosphate + 5-amino-1-(5-phospho-beta-D-ribosyl)imidazole-4-carboxamide + L-glutamate + H(+). It participates in amino-acid biosynthesis; L-histidine biosynthesis; L-histidine from 5-phospho-alpha-D-ribose 1-diphosphate: step 5/9. In terms of biological role, IGPS catalyzes the conversion of PRFAR and glutamine to IGP, AICAR and glutamate. The HisF subunit catalyzes the cyclization activity that produces IGP and AICAR from PRFAR using the ammonia provided by the HisH subunit. This chain is Imidazole glycerol phosphate synthase subunit HisF, found in Pelagibacter ubique (strain HTCC1062).